A 2279-amino-acid chain; its full sequence is Zinc finger protein 318 (2279 aa).

Composition is skewed to low complexity over residues 1 to 12 (MYRSSARSSVSS) and 25 to 39 (SGRSSGSSSGPARRS). 2 disordered regions span residues 1 to 140 (MYRS…PGLC) and 164 to 189 (RRRLSDRLGSPVDNLEDMDRDDLTDD). Residues 1 to 1092 (MYRSSARSSV…THMHNKKHTQ (1092 aa)) form an interaction with AR region. Ser-40 carries the phosphoserine modification. Basic residues predominate over residues 53 to 67 (PARRPRSPSGHRGRR). Phosphoserine is present on residues Ser-79 and Ser-81. Residues 110-132 (SRGESRADYARDGRGDHPGDSGS) are compositionally biased toward basic and acidic residues. Residues Ser-136 and Ser-173 each carry the phosphoserine modification. A compositionally biased stretch (acidic residues) spans 177–188 (NLEDMDRDDLTD). Residue Tyr-205 is modified to Phosphotyrosine. Residues Ser-207 and Ser-214 each carry the phosphoserine modification. Disordered stretches follow at residues 279-346 (TVKI…DGGG) and 397-416 (LESFSSSTSSSQDHPLYSGH). Residues 311 to 333 (LDPEFRELDLARRKREEEEERSR) show a composition bias toward basic and acidic residues. Residues 315–343 (FRELDLARRKREEEEERSRSLSQELVGVD) are a coiled coil. Residues Ser-464, Ser-472, Ser-501, and Ser-527 each carry the phosphoserine modification. Disordered regions lie at residues 514–533 (LADSTSTQEKRRRSFPDIED) and 540–570 (GDEEEDLKAESVPKPLGSSESEVMRQKASSL). Glycyl lysine isopeptide (Lys-Gly) (interchain with G-Cter in SUMO2) cross-links involve residues Lys-547, Lys-553, Lys-566, and Lys-578. Over residues 664–683 (FSADRRSSDPHRLESREAHH) the composition is skewed to basic and acidic residues. The interval 664–709 (FSADRRSSDPHRLESREAHHSNTHSPEVSHPHPPSPVDPYLLTKNS) is disordered. Thr-842 is modified (phosphothreonine). Residues 876-980 (EKISDEKNRA…SELDKVAQIL (105 aa)) are a coiled coil. Basic and acidic residues-rich tracts occupy residues 922 to 941 (QQGEMLRKKRREKDGHKDPL) and 989 to 1012 (QKSLSDSREPTEKPGKAEKSKSPE). Disordered regions lie at residues 922–942 (QQGEMLRKKRREKDGHKDPLL) and 989–1051 (QKSL…TKQL). Ser-1010 carries the post-translational modification Phosphoserine. Residues 1013–1023 (KVSSFSNSSSN) are compositionally biased toward low complexity. Positions 1024–1034 (KESKVNNEKFR) are enriched in basic and acidic residues. Ser-1037 carries the phosphoserine modification. 2 consecutive Matrin-type zinc fingers follow at residues 1063–1097 (AGNHWCKDCNTICGTMFDFFTHMHNKKHTQTLDPY) and 1136–1166 (FYCQLCEEFLGDPISGEQHVKGHQHNEKYKK). 5 stretches are compositionally biased toward basic and acidic residues: residues 1195-1235 (RRQS…KLED), 1242-1251 (NSPEKAENKR), 1258-1267 (QLKEEVKKES), 1279-1288 (KKPEKEEEKS), and 1296-1316 (SKEEILESSKDKEDGKTEAGK). The interval 1195-1319 (RRQSELKRKL…GKTEAGKAKP (125 aa)) is disordered. Ser-1243 and Ser-1267 each carry phosphoserine. At Ser-1420 the chain carries Phosphoserine. Disordered regions lie at residues 1428–1463 (AEKSEPSHLPEQILPPPPPPPPPPPPPPPVIPHPAA), 1577–1628 (GKGA…EELH), 1702–1735 (SSFQSDTSRDISPEKSELDLGEPGPPGVEPPPQL), and 1753–1775 (ESVNQDKESQELRKSEDCRESEI). Residues 1440-1462 (ILPPPPPPPPPPPPPPPVIPHPA) are compositionally biased toward pro residues. The segment covering 1602-1623 (SNLSRTKSSDTSSTSPLNSSAS) has biased composition (low complexity). Residues 1708-1719 (TSRDISPEKSEL) are compositionally biased toward basic and acidic residues. Ser-1713 carries the post-translational modification Phosphoserine. The span at 1724–1734 (PGPPGVEPPPQ) shows a compositional bias: pro residues. Residues 1768-1792 (EDCRESEIETNTELKERVKELSEGI) adopt a coiled-coil conformation. Phosphoserine is present on residues Ser-1856, Ser-1896, Ser-1971, Ser-2030, Ser-2035, Ser-2091, Ser-2101, Ser-2189, Ser-2192, and Ser-2243. Residues 2252–2279 (DNMVPQGMPEQETTVGAIQDHTESSVHN) form a disordered region.

Homodimer. Heterodimer of isoform 1 and isoform 2. Isoform 1 and isoform 2 interact with AR. In terms of tissue distribution, expressed in endocrine tissue.

The protein resides in the nucleus. In terms of biological role, acts as a transcriptional corepressor for AR-mediated transactivation function. May act as a transcriptional regulator during spermatogenesis and, in particular, during meiotic division. Functionally, acts as a transcriptional coactivator for AR-mediated transactivation function. May act as a transcriptional regulator during spermatogenesis and, in particular, during meiotic division. The polypeptide is Zinc finger protein 318 (ZNF318) (Homo sapiens (Human)).